Here is a 260-residue protein sequence, read N- to C-terminus: Putative ABC transporter ATP-binding protein (260 aa).

The 240-residue stretch at 4-243 (ISMKNVTLKK…QVLENFYESP (240 aa)) folds into the ABC transporter domain. An ATP-binding site is contributed by 36–43 (GLNGSGKT).

Belongs to the ABC transporter superfamily.

The protein is Putative ABC transporter ATP-binding protein (abcX) of Streptococcus mutans serotype c (strain ATCC 700610 / UA159).